We begin with the raw amino-acid sequence, 158 residues long: C-type lectin galactose-binding isoform (158 aa).

An N-terminal signal peptide occupies residues 1–23 (MGRFLLVTLSLLVMAFFLNGANS). Intrachain disulfides connect cysteine 26–cysteine 37, cysteine 54–cysteine 154, and cysteine 129–cysteine 146. A C-type lectin domain is found at 33 to 155 (RNGFCYKVFN…CTALRPFLCQ (123 aa)). The Ca(2+) site is built by glutamine 119, aspartate 121, and glutamate 127. Residues 119–121 (QPD) carry the Galactose-binding motif. Asparagine 134 is a glycosylation site (N-linked (GlcNAc...) asparagine). Positions 142 and 143 each coordinate Ca(2+).

The protein belongs to the true venom lectin family. Dimer. Probably disulfide-linked homodimer. Expressed by the venom gland.

Its subcellular location is the secreted. Its function is as follows. Galactose-binding lectin that binds to and agglutinates erythrocytes in a calcium-dependent manner. The protein is C-type lectin galactose-binding isoform of Pseudechis australis (Mulga snake).